The following is a 120-amino-acid chain: MAMRAKDALGRFGEEVASRHLAAGGAAILDRNWRCREGELDLVLRDGADLVFCEVKTRSGTRFGSAAEAVVGRKAARIRRLAARWLAEHPHAPSSVRFDVVLVSRPPVGPVRVEHLRGAF.

Belongs to the UPF0102 family.

This is UPF0102 protein FRAAL5785 from Frankia alni (strain DSM 45986 / CECT 9034 / ACN14a).